The sequence spans 486 residues: Cysteine--tRNA ligase (486 aa).

Residue C29 participates in Zn(2+) binding. The 'HIGH' region signature appears at 31-41 (ITVYDYCHLGH). Residues C215, H240, and E244 each coordinate Zn(2+). The short motif at 272-276 (KMSKS) is the 'KMSKS' region element. Position 275 (K275) interacts with ATP.

This sequence belongs to the class-I aminoacyl-tRNA synthetase family. As to quaternary structure, monomer. The cofactor is Zn(2+).

It localises to the cytoplasm. It carries out the reaction tRNA(Cys) + L-cysteine + ATP = L-cysteinyl-tRNA(Cys) + AMP + diphosphate. The polypeptide is Cysteine--tRNA ligase (Gloeothece citriformis (strain PCC 7424) (Cyanothece sp. (strain PCC 7424))).